Reading from the N-terminus, the 224-residue chain is GTP cyclohydrolase 1 (224 aa).

The disordered stretch occupies residues 1–20 (MKQEKTVSPTVENNRSAESR). Residues Cys114, His117, and Cys185 each coordinate Zn(2+).

The protein belongs to the GTP cyclohydrolase I family. Toroid-shaped homodecamer, composed of two pentamers of five dimers.

The catalysed reaction is GTP + H2O = 7,8-dihydroneopterin 3'-triphosphate + formate + H(+). It participates in cofactor biosynthesis; 7,8-dihydroneopterin triphosphate biosynthesis; 7,8-dihydroneopterin triphosphate from GTP: step 1/1. The chain is GTP cyclohydrolase 1 from Chlorobaculum tepidum (strain ATCC 49652 / DSM 12025 / NBRC 103806 / TLS) (Chlorobium tepidum).